The chain runs to 210 residues: GTP pyrophosphokinase YwaC (210 aa).

The protein belongs to the RelA/SpoT family. In terms of assembly, homotetramer.

The enzyme catalyses GTP + ATP = guanosine 3'-diphosphate 5'-triphosphate + AMP. Its pathway is purine metabolism; ppGpp biosynthesis; ppGpp from GTP: step 1/2. Functions as a (p)ppGpp synthase; GDP can be used instead of GTP, resulting in an increase of (p)ppGpp synthesis. Overexpression in relA mutants (triple relA-yjbM-ywaC deletions and single relA deletions) leads to growth arrest; GTP levels fall drastically, various guanine-related nucleotides are synthesized (ppGp or pGpp), the cellular transcriptional profile changes dramatically and 70S ribosome dimerization occurs. Overexpression in the presence of a wild-type relA gene does not have these effects. In eubacteria ppGpp (guanosine 3'-diphosphate 5'-diphosphate) is a mediator of the stringent response that coordinates a variety of cellular activities in response to changes in nutritional abundance. activities in response to changes in nutritional abundance. YwaC has probably a minor role in stringent response. This Bacillus subtilis (strain 168) protein is GTP pyrophosphokinase YwaC (ywaC).